The following is a 409-amino-acid chain: Protein naked cuticle homolog 2-like (409 aa).

Glycine 2 carries the N-myristoyl glycine lipid modification. The EF-hand domain occupies 109–144; that stretch reads AEDNRQEWVFTLYDFDNSGKVTKEDMSSLMHTIYDV. Residues aspartate 122, aspartate 124, serine 126, lysine 128, and aspartate 133 each contribute to the Ca(2+) site. Disordered stretches follow at residues 166–224, 243–315, 346–367, and 388–409; these read VTPE…YCVD, TSRF…RFPG, NHTH…IRSR, and RHEH…YHQT. Composition is skewed to basic and acidic residues over residues 171 to 185 and 193 to 224; these read AARR…RETS and VRSE…YCVD. The span at 247-268 shows a compositional bias: low complexity; sequence DSSSPDADQDPPSRSSHSQSRP. Residues 389 to 409 show a composition bias toward basic residues; it reads HEHHHHHEHHHHHHYHHYHQT.

This sequence belongs to the NKD family.

The protein resides in the cell membrane. Its subcellular location is the cytoplasm. Its function is as follows. Cell autonomous antagonist of both the canonical and non-canonical Wnt signaling pathways. This Danio rerio (Zebrafish) protein is Protein naked cuticle homolog 2-like (nkd2l).